A 467-amino-acid polypeptide reads, in one-letter code: 5'-nucleotidase domain-containing protein 1 (467 aa).

The Nucleophile role is filled by Asp16. Asp16 and Asp18 together coordinate Mg(2+). The active-site Proton donor is the Asp18. At Lys181 the chain carries N6-acetyllysine. Asp323 serves as a coordination point for Mg(2+).

This sequence belongs to the 5'(3')-deoxyribonucleotidase family.

In Mus musculus (Mouse), this protein is 5'-nucleotidase domain-containing protein 1 (Nt5dc1).